The chain runs to 76 residues: Conotoxin VnMEKL-021 (76 aa).

An N-terminal signal peptide occupies residues methionine 1–alanine 19. Positions leucine 20–serine 37 are excised as a propeptide. 3 disulfides stabilise this stretch: cysteine 51-cysteine 65, cysteine 58-cysteine 69, and cysteine 64-cysteine 73.

Belongs to the conotoxin O2 superfamily. In terms of tissue distribution, expressed by the venom duct.

The protein localises to the secreted. In Conus ventricosus (Mediterranean cone), this protein is Conotoxin VnMEKL-021.